Reading from the N-terminus, the 555-residue chain is ATP-dependent RNA helicase MRH4, mitochondrial (555 aa).

Residues 1–25 (MFKLLIPNKYNYVIRPLVRFKSIKS) constitute a mitochondrion transit peptide. The Q motif motif lies at 101–108 (DIKPTPVQ). Residues 144–361 (ANEIQKTKVF…SKLFPDQRSL (218 aa)) enclose the Helicase ATP-binding domain. 157 to 164 (AETGSGKT) contacts ATP. The DEAD box signature appears at 309–312 (DEAD). One can recognise a Helicase C-terminal domain in the interval 395–555 (CLAQALYAIS…NAIIRGLRIG (161 aa)).

It belongs to the DEAD box helicase family. MRH4 subfamily.

The protein resides in the mitochondrion. The enzyme catalyses ATP + H2O = ADP + phosphate + H(+). ATP-binding RNA helicase involved in mitochondrial RNA metabolism. Required for maintenance of mitochondrial DNA. In Candida albicans (strain SC5314 / ATCC MYA-2876) (Yeast), this protein is ATP-dependent RNA helicase MRH4, mitochondrial (MRH4).